The sequence spans 735 residues: MATKVFPSFSKGLAQDPTTRRIWFGIATAHDFESHDGMTEELVYQKIFASHFGQLSIIFLWTSGNLFHVAWQGNFEQWVQDPLHVRPIAHAIWDPHFGQPAVEAFTRGGATGPVNIATSGVYQWWYTIGLRANQDLYNGSLFLSILSALFLLAGWLHLQKNFRPSLSWFKDAESRLNHHLSGLFGISSLAWTGHLVHVAIPASRGQRVGWDNFLTTLPHPQGLAPLWTGNWAAYAQNPDSASHIFSTSQGSGQAILTFLGGFHPQTQSLWLSDMAHHHLAIAVIFVLAGHMYRTSFGIGHRLSDILDSHVAPSGNMGGGHRGLFETINNSLHFQLGLALASVGTICSLVAQHMYSLPPYAYLANDFTTQAALYTHHQYIASFIICGAFAHGAIFFIRDYDPEQNKGNVLARMLDHKEAIISHLSWVSLFLGFHTLGLYVHNDVMQAFGTPEKQILIEPVFAQWIQASHGKALYGFDVLLSSSGSVAFSASQTLWLPGWLDAINNNSNSLFLNIGPGDFLVHHAIALGLHTTTLILVKGALDARGSKLMPDKKDFGYSFPCDGPGRGGTCDISAYDAFYLSIFWSLNTVGWVTFYWHWKHLTLWQGNVAQFDESSTYIMGWLRDYLWLNSSQLINGYNPFGMNSLSVWAWVFLFGHLIYATGFMFLISWRGYWQELIETLVWSHEKTPIANLVQWVDKPVALSIVQARLVGLVHFSVGYIFTYAAFLIASTSGKFG.

8 helical membrane-spanning segments follow: residues 47-70, 136-159, 176-200, 274-292, 331-354, 370-396, 418-440, and 518-536; these read IFASHFGQLSIIFLWTSGNLFHVA, LYNGSLFLSILSALFLLAGWLHLQ, LNHHLSGLFGISSLAWTGHLVHVAI, MAHHHLAIAVIFVLAGHMY, LHFQLGLALASVGTICSLVAQHMY, AALYTHHQYIASFIICGAFAHGAIFFI, AIISHLSWVSLFLGFHTLGLYVH, and FLVHHAIALGLHTTTLILV. Residues cysteine 560 and cysteine 569 each contribute to the [4Fe-4S] cluster site. 2 consecutive transmembrane segments (helical) span residues 576 to 597 and 644 to 666; these read AFYLSIFWSLNTVGWVTFYWHW and LSVWAWVFLFGHLIYATGFMFLI. Residues histidine 655, methionine 663, and tyrosine 671 each coordinate chlorophyll a. Phylloquinone is bound at residue tryptophan 672. The helical transmembrane segment at 708–728 threads the bilayer; that stretch reads LVGLVHFSVGYIFTYAAFLIA.

It belongs to the PsaA/PsaB family. As to quaternary structure, the PsaA/B heterodimer binds the P700 chlorophyll special pair and subsequent electron acceptors. PSI consists of a core antenna complex that captures photons, and an electron transfer chain that converts photonic excitation into a charge separation. The eukaryotic PSI reaction center is composed of at least 11 subunits. The cofactor is P700 is a chlorophyll a/chlorophyll a' dimer, A0 is one or more chlorophyll a, A1 is one or both phylloquinones and FX is a shared 4Fe-4S iron-sulfur center..

It is found in the plastid. The protein localises to the chloroplast thylakoid membrane. It carries out the reaction reduced [plastocyanin] + hnu + oxidized [2Fe-2S]-[ferredoxin] = oxidized [plastocyanin] + reduced [2Fe-2S]-[ferredoxin]. Its function is as follows. PsaA and PsaB bind P700, the primary electron donor of photosystem I (PSI), as well as the electron acceptors A0, A1 and FX. PSI is a plastocyanin/cytochrome c6-ferredoxin oxidoreductase, converting photonic excitation into a charge separation, which transfers an electron from the donor P700 chlorophyll pair to the spectroscopically characterized acceptors A0, A1, FX, FA and FB in turn. Oxidized P700 is reduced on the lumenal side of the thylakoid membrane by plastocyanin or cytochrome c6. In Stigeoclonium helveticum (Green alga), this protein is Photosystem I P700 chlorophyll a apoprotein A2.